Reading from the N-terminus, the 435-residue chain is GTPase Obg (435 aa).

The region spanning 6 to 164 is the Obg domain; the sequence is ADFVDRVKIF…RWLELELKIL (159 aa). Positions 165–335 constitute an OBG-type G domain; sequence ADVGLVGYPN…LVSKLASIVR (171 aa). Residues 171 to 178, 196 to 200, 217 to 220, 287 to 290, and 316 to 318 each bind GTP; these read GYPNVGKS, FTTLI, DIPG, NKID, and SAL. S178 and T198 together coordinate Mg(2+). In terms of domain architecture, OCT spans 357–435; sequence RRLPEKFHLE…IGDFEFEYRE (79 aa).

It belongs to the TRAFAC class OBG-HflX-like GTPase superfamily. OBG GTPase family. In terms of assembly, monomer. Requires Mg(2+) as cofactor.

Its subcellular location is the cytoplasm. Its function is as follows. An essential GTPase which binds GTP, GDP and possibly (p)ppGpp with moderate affinity, with high nucleotide exchange rates and a fairly low GTP hydrolysis rate. Plays a role in control of the cell cycle, stress response, ribosome biogenesis and in those bacteria that undergo differentiation, in morphogenesis control. This chain is GTPase Obg, found in Thermotoga sp. (strain RQ2).